The chain runs to 548 residues: Solute carrier family 22 member 7 (548 aa).

The helical transmembrane segment at 21-41 threads the bilayer; the sequence is VALLALPRVLLPLHFLLPIFL. Asparagine 91 carries N-linked (GlcNAc...) asparagine glycosylation. 11 helical membrane-spanning segments follow: residues 146–166, 180–200, 204–224, 234–254, 259–279, 346–366, 376–397, 404–423, 432–452, 466–486, and 493–513; these read AAST…GYLS, VSTL…MFAI, LTGS…LEWL, VLSS…GYLI, WLLL…WWVP, ISLC…GLSL, YQTQ…YLSV, LTQA…RLLV, TVLA…AYLF, MGLT…AALL, and LPKL…LLLP. The active-site Important for glutamate counteranion efflux is phenylalanine 441. The tract at residues 522–548 is disordered; it reads ETIQDVERKSAPTSLQEEEMPMKQVQN.

It belongs to the major facilitator (TC 2.A.1) superfamily. Organic cation transporter (TC 2.A.1.19) family. In terms of tissue distribution, mainly expressed in liver and kidney. In kidney, expressed in proximal tubular cells. Also expressed in pancreas, small intestine, spinal cord, lung, brain and heart. Expressed in fetal liver.

Its subcellular location is the basolateral cell membrane. It localises to the apical cell membrane. The protein resides in the cell membrane. The protein localises to the cytoplasm. It is found in the cytosol. The catalysed reaction is orotate(out) + L-glutamate(in) = orotate(in) + L-glutamate(out). It catalyses the reaction 3',5'-cyclic GMP(in) = 3',5'-cyclic GMP(out). The enzyme catalyses GMP(in) = GMP(out). It carries out the reaction 2'-deoxyguanosine(in) = 2'-deoxyguanosine(out). The catalysed reaction is GDP(in) = GDP(out). It catalyses the reaction guanosine(in) = guanosine(out). The enzyme catalyses GTP(in) = GTP(out). It carries out the reaction 3',5'-cyclic AMP(in) = 3',5'-cyclic AMP(out). The catalysed reaction is creatinine(in) = creatinine(out). It catalyses the reaction prostaglandin E2(out) = prostaglandin E2(in). The enzyme catalyses 2-oxoglutarate(in) = 2-oxoglutarate(out). It carries out the reaction glutarate(in) = glutarate(out). The catalysed reaction is urate(out) = urate(in). It catalyses the reaction estrone 3-sulfate(out) = estrone 3-sulfate(in). The enzyme catalyses prostaglandin F2alpha(out) = prostaglandin F2alpha(in). Functions as a Na(+)-independent bidirectional multispecific transporter. Contributes to the renal and hepatic elimination of endogenous organic compounds from the systemic circulation into the urine and bile, respectively. Capable of transporting a wide range of purine and pyrimidine nucleobases, nucleosides and nucleotides, with cGMP, 2'deoxyguanosine and GMP being the preferred substrates. Functions as a pH- and chloride-independent cGMP bidirectional facilitative transporter that can regulate both intracellular and extracellular levels of cGMP and may be involved in cGMP signaling pathways. Mediates orotate/glutamate bidirectional exchange and most likely display a physiological role in hepatic release of glutamate into the blood. Involved in renal secretion and possible reabsorption of creatinine. Able to uptake prostaglandin E2 (PGE2) and may contribute to PGE2 renal excretion. Also transports alpha-ketoglutarate and urate. Apart from the orotate/glutamate exchange, the counterions for the uptake of other SLC22A7/OAT2 substrates remain to be identified. In terms of biological role, non functional transporter. Functionally, involved in the uptake of prostaglandin F2-alpha (PGF2-alpha). This Homo sapiens (Human) protein is Solute carrier family 22 member 7.